Reading from the N-terminus, the 77-residue chain is Large ribosomal subunit protein bL28 (77 aa).

It belongs to the bacterial ribosomal protein bL28 family.

The chain is Large ribosomal subunit protein bL28 from Karelsulcia muelleri (strain GWSS) (Sulcia muelleri).